The sequence spans 143 residues: Transcriptional regulator MraZ (143 aa).

2 SpoVT-AbrB domains span residues 5-47 (EYQH…SLEE) and 76-119 (AAEV…DKSK).

Belongs to the MraZ family. Forms oligomers.

Its subcellular location is the cytoplasm. The protein localises to the nucleoid. The polypeptide is Transcriptional regulator MraZ (Acetivibrio thermocellus (strain ATCC 27405 / DSM 1237 / JCM 9322 / NBRC 103400 / NCIMB 10682 / NRRL B-4536 / VPI 7372) (Clostridium thermocellum)).